The primary structure comprises 79 residues: UPF0154 protein Lm4b_01315 (79 aa).

A helical membrane pass occupies residues 2 to 22 (WIYILVGIICLLAGLAGGFFI). Over residues 57–66 (KINQMMSAMN) the composition is skewed to polar residues. Positions 57-79 (KINQMMSAMNKQQEKEKPKKTKK) are disordered.

Belongs to the UPF0154 family.

It localises to the cell membrane. This chain is UPF0154 protein Lm4b_01315, found in Listeria monocytogenes serotype 4b (strain CLIP80459).